A 179-amino-acid chain; its full sequence is 3-hydroxyanthranilate 3,4-dioxygenase (179 aa).

Residue R47 coordinates O2. The Fe cation site is built by H51, E57, and H96. Residue E57 coordinates substrate. Substrate contacts are provided by R100 and E110. C125, C128, C162, and C165 together coordinate Fe cation.

This sequence belongs to the 3-HAO family. Fe(2+) serves as cofactor.

The enzyme catalyses 3-hydroxyanthranilate + O2 = (2Z,4Z)-2-amino-3-carboxymuconate 6-semialdehyde. It functions in the pathway cofactor biosynthesis; NAD(+) biosynthesis; quinolinate from L-kynurenine: step 3/3. Functionally, catalyzes the oxidative ring opening of 3-hydroxyanthranilate to 2-amino-3-carboxymuconate semialdehyde, which spontaneously cyclizes to quinolinate. The sequence is that of 3-hydroxyanthranilate 3,4-dioxygenase from Bacillus cereus (strain 03BB102).